The chain runs to 422 residues: MRISILQLVPVVGYIGFALGELYKPKNSISCSPNNPCPAEWPCCSPYNECGAGPICVGGCNVRSSFDEESCAPIPALVASQKLEFVSTPKVPKFIVNYQPKPPIREGNGPNKANTKVGVVEGELNSKRIIHYAKFLVTPDSKEAEKMLEDFDFTHSGYTSIEASSGNIVLAMPKKTTGSLITSTRSFLYGKASVRMKTARSRGVVTAFDLTSAIGDEIDFEWLGGDLMTAQSNYYSQGHLDYTRMQRFPVGADTWATYHTYEIDWDPDRIIWYVDGKIARTVLKKDTWDPISKEYRYPQTPMRLEIAVWPGGSETNGPGTINWAGGLIDWENSPDIIEKGQFTAHVEQITVTPYQNKFTEQVQFCIKAKKKAPTFSQKDLSRVVVSYNRQDRLNHHDEGSLKWDCFVTPKINDWLSSWKRSK.

The first 20 residues, 1-20 (MRISILQLVPVVGYIGFALG), serve as a signal peptide directing secretion. In terms of domain architecture, GH16 spans 67–339 (DEESCAPIPA…WENSPDIIEK (273 aa)). Glutamate 217 functions as the Nucleophile in the catalytic mechanism. The Proton donor role is filled by glutamate 221.

The protein belongs to the glycosyl hydrolase 16 family. CRR1 subfamily.

The protein resides in the spore wall. Its function is as follows. Spore specific glycosidase involved in spore wall assembly during sporulation. May be involved in copper import. The polypeptide is Probable glycosidase CRR1 (CRR1) (Saccharomyces cerevisiae (strain ATCC 204508 / S288c) (Baker's yeast)).